A 556-amino-acid polypeptide reads, in one-letter code: 2-succinyl-5-enolpyruvyl-6-hydroxy-3-cyclohexene-1-carboxylate synthase (556 aa).

The protein belongs to the TPP enzyme family. MenD subfamily. Homodimer. Mg(2+) is required as a cofactor. Mn(2+) serves as cofactor. The cofactor is thiamine diphosphate.

The catalysed reaction is isochorismate + 2-oxoglutarate + H(+) = 5-enolpyruvoyl-6-hydroxy-2-succinyl-cyclohex-3-ene-1-carboxylate + CO2. It participates in quinol/quinone metabolism; 1,4-dihydroxy-2-naphthoate biosynthesis; 1,4-dihydroxy-2-naphthoate from chorismate: step 2/7. Its pathway is quinol/quinone metabolism; menaquinone biosynthesis. Catalyzes the thiamine diphosphate-dependent decarboxylation of 2-oxoglutarate and the subsequent addition of the resulting succinic semialdehyde-thiamine pyrophosphate anion to isochorismate to yield 2-succinyl-5-enolpyruvyl-6-hydroxy-3-cyclohexene-1-carboxylate (SEPHCHC). This is 2-succinyl-5-enolpyruvyl-6-hydroxy-3-cyclohexene-1-carboxylate synthase from Salmonella choleraesuis (strain SC-B67).